Here is a 568-residue protein sequence, read N- to C-terminus: Estrogen receptor beta (568 aa).

The tract at residues 1–177 (MHQQSPVDDV…SLRGKADMHY (177 aa)) is modulating. 2 consecutive NR C4-type zinc fingers follow at residues 178–198 (CAVC…CEGC) and 214–238 (CPAT…LRKC). Positions 178–243 (CAVCSDYASG…RLRKCYEVGM (66 aa)) form a DNA-binding region, nuclear receptor. The NR LBD domain maps to 300-536 (TPEELIARIM…DLLLEMLDAH (237 aa)).

Belongs to the nuclear hormone receptor family. NR3 subfamily. In terms of assembly, binds DNA as a homodimer. Can form a heterodimer with ER-alpha.

It localises to the nucleus. In terms of biological role, binds estrogens with an affinity similar to that of ER-alpha, and activates expression of reporter genes containing estrogen response elements (ERE) in an estrogen-dependent manner. The polypeptide is Estrogen receptor beta (esr2) (Oncorhynchus mykiss (Rainbow trout)).